A 227-amino-acid polypeptide reads, in one-letter code: Isopentenyl-diphosphate Delta-isomerase 1 (227 aa).

Lys36 provides a ligand contact to substrate. Residues His40 and His51 each coordinate Mg(2+). The region spanning 49-199 (LLHRAFSVFL…EIKLTPWFKI (151 aa)) is the Nudix hydrolase domain. Substrate is bound by residues Arg70 and Lys74. Cys86 is a catalytic residue. Residue Ser87 coordinates substrate. Positions 146 and 148 each coordinate Mg(2+). Residue Glu148 is part of the active site. Residue Lys176 is modified to N6-acetyllysine. The Microbody targeting signal signature appears at 225 to 227 (HRL).

The protein belongs to the IPP isomerase type 1 family. As to quaternary structure, monomer. The cofactor is Mg(2+).

It is found in the peroxisome. It carries out the reaction isopentenyl diphosphate = dimethylallyl diphosphate. Its pathway is isoprenoid biosynthesis; dimethylallyl diphosphate biosynthesis; dimethylallyl diphosphate from isopentenyl diphosphate: step 1/1. Functionally, catalyzes the 1,3-allylic rearrangement of the homoallylic substrate isopentenyl (IPP) to its highly electrophilic allylic isomer, dimethylallyl diphosphate (DMAPP). In Mus musculus (Mouse), this protein is Isopentenyl-diphosphate Delta-isomerase 1 (Idi1).